Consider the following 729-residue polypeptide: Serine/threonine-protein kinase TBK1 (729 aa).

Residues 9 to 310 (WLLSDILGQG…ETSDILHRMV (302 aa)) form the Protein kinase domain. ATP is bound at residue 15-23 (LGQGATANV). Lysine 30 participates in a covalent cross-link: Glycyl lysine isopeptide (Lys-Gly) (interchain with G-Cter in ubiquitin). Lysine 38 is an ATP binding site. Residue aspartate 135 is the Proton acceptor of the active site. Serine 172 is modified (phosphoserine; by autocatalysis and IKKB). Residues 309–385 (MVIHVFSLQQ…ENPIFVVSRE (77 aa)) enclose the Ubiquitin-like domain. Residue lysine 401 forms a Glycyl lysine isopeptide (Lys-Gly) (interchain with G-Cter in ubiquitin) linkage. 2 coiled-coil regions span residues 407–657 (DLDG…LQET) and 658–713 (LPQK…ILER). Residue lysine 607 is modified to N6-methyllysine; by SETD4. An interaction with AZI2, TANK and TBKBP1 region spans residues 621-729 (RKMLHLRKQL…DGGLRNVDCL (109 aa)). A Glycyl lysine isopeptide (Lys-Gly) (interchain with G-Cter in ubiquitin) cross-link involves residue lysine 670. Serine 716 is subject to Phosphoserine.

The protein belongs to the protein kinase superfamily. Ser/Thr protein kinase family. I-kappa-B kinase subfamily. As to quaternary structure, homodimer. Interacts with DDX3X, TIRAP and TRAF2. Part of a ternary complex consisting of TANK, TRAF2 and TBK1. Interacts with AZI2, TANK and TBKBP1; these interactions are mutually exclusive and mediate TBK1 activation. Interacts with GSK3B; this interaction promotes TBK1 self-association and autophosphorylation. Interacts with SIKE1; SIKE1 is associated with TBK1 under physiological condition and dissociated from TBK1 upon viral infection or TLR3 stimulation. Interacts with IRF3, leading to IRF3 phosphorylation. Interacts with RIGI. Interacts with CYLD. Interacts with OPTN and TRAF3. Interacts with SRC. Interacts with the exocyst complex subunit SEC5/EXOC2; this interaction is sufficient to trigger TBK1 activity. Interacts with STING1, leading to STING1 phosphorylation. Interacts with IFIT3 (via N-terminus). Interacts with MAVS; interaction only takes place in the presence of IFIT3 and leads to MAVS phosphorylation. Interacts (via protein kinase domain) with TTLL12 (via TTL domain); the interaction prevents MAVS binding to TBK1. Interacts with TICAM1; this interaction is enhanced in the presence of WDFY1 and leads to TICAM1 phosphorylation. Interacts with TRIM26. Interacts with TRIM23. Interacts with TTC4 and IKBKE. Interacts with HNRNPA2B1. Interacts with DDX3X. Interacts with TRIM14. Interacts with CEP170; efficient complex formation may be dependent on the presence of CCDC61. Interacts with TRAF3IP3. Interacts with HSP90AA1; the interaction mediates TBK1 association with TOMM70. Interacts with TAX1BP1. Interacts with kinase IKBKB; the complex interacts with STAT1, leading to phosphorylation of STAT1 on 'Thr-749' by IKBKB. Interacts with ICOS; this interaction is critical for the maturation of T follicular regulatory cells. Interacts with RNF144B; this interaction prevents TBK1 phosphorylation and subsequent activation. Interacts with ASB8; this interaction promotes TBK1 proteasomal degradation. Forms a ternary complex with ZNF268 and SETD4; the interaction with SETD4 is ZNF268-dependent and leads to TBK1 monomethylation, which enhances its interaction with IRF3 and MAVS. In terms of assembly, (Microbial infection) Interacts with Borna disease virus (BDV) P protein leading to its phosphorylation. (Microbial infection) Interacts with Ebola virus protein VP35. As to quaternary structure, (Microbial infection) Interacts with HCV NS3; this interaction leads to inhibition of cellular antiviral response by blocking necessary interactions between the TBK1 and its substrates IRF3 and IRF7. In terms of assembly, (Microbial infection) Interacts with human herpesvirus 1 protein ICP34.5. (Microbial infection) Interacts with Zika virus non-structural protein 1/NS1 and non-structural protein 4B/NS4B. As to quaternary structure, (Microbial infection) Interacts with SARS-CoV-2 non-structural protein 6; this interaction decreases IRF3 phosphorylation by 57%, which leads to reduced IFN-beta (IFNB) production. Interacts with SARS-CoV-2 helicase; this interaction inhibits TBK1 phosphorylation and decreases IRF3 phosphorylation by 75%, which leads to reduced IFN-beta production. Interacts with SARS-CoV-2 M protein; the interaction promotes TBK1 degradation via 'Lys-48'-linked ubiquitination. In terms of assembly, (Microbial infection) Interacts with human cytomegalovirus protein UL35; this interaction inhibits type I interferon production. (Microbial infection) Interacts with heartland virus NSs; this interaction antagonizes TBK1 phosphorylation and inhibits TBK1-IRF3 interaction and thus the establishment of an antiviral state. As to quaternary structure, (Microbial infection) Interacts (via N-terminus) with Severe fever with thrombocytopenia virus (SFTSV) NSs; this interaction antagonizes TBK1 phosphorylation and sequesters TBK1 in NSs-induced cytoplasmic inclusion bodies thereby inhibiting the IFN responses. In terms of processing, autophosphorylation at Ser-172 activates the kinase, and is an essential step for virus-triggered signaling. Phosphorylated by IKBKB/IKKB at Ser-172. Phosphorylation requires homodimerization and ubiquitination at Lys-30 and Lys-401. Dephosphorylated at Ser-172 by PPM1B and this negatively regulates its role in mediating antiviral response. Post-translationally, 'Lys-63'-linked polyubiquitination by MIB1 after RNA virus infection, or by NRDP1 after LPS stimulation at Lys-30 and Lys-401, participates in kinase activation. 'Lys-48'-linked polyubiquitination at Lys-670 by DTX4 leads to proteasomal degradation. 'Lys-48'-linked polyubiquitination by TRAIP also leads to proteasomal degradation. 'Lys-48'-linked polyubiquitination by TRAF7; leading to proteasomal degradation. 'Lys-63'-linked polyubiquitination by RNF128 at Lys-30 and Lys-401 leads to the activation of antiviral responses. 'Lys-48'-linked polyubiquitination after 'lys-33'-linked deubiquitination by USP38 promotes TBK1 degradation. (Microbial infection) Interaction with SARS-CoV-2 M protein induces 'Lys-48'-linked ubiquitination which leads to proteasomal degradation. In terms of processing, (Microbial infection) Deubiquitinated by Epstein-Barr virus BPLF1 on both 'Lys-48' and 'Lys-63'-linked ubiquitin chains; leading to inhibition of type I interfewron production. Post-translationally, monomethylation at Lys-607 by SETD4 maximizes TBK1 activation and promotes efficient interferon signaling. Ubiquitous with higher expression in testis. Expressed in the ganglion cells, nerve fiber layer and microvasculature of the retina.

It is found in the cytoplasm. The enzyme catalyses L-seryl-[protein] + ATP = O-phospho-L-seryl-[protein] + ADP + H(+). It carries out the reaction L-threonyl-[protein] + ATP = O-phospho-L-threonyl-[protein] + ADP + H(+). Its function is as follows. Serine/threonine kinase that plays an essential role in regulating inflammatory responses to foreign agents. Following activation of toll-like receptors by viral or bacterial components, associates with TRAF3 and TANK and phosphorylates interferon regulatory factors (IRFs) IRF3 and IRF7 as well as DDX3X. This activity allows subsequent homodimerization and nuclear translocation of the IRFs leading to transcriptional activation of pro-inflammatory and antiviral genes including IFNA and IFNB. In order to establish such an antiviral state, TBK1 form several different complexes whose composition depends on the type of cell and cellular stimuli. Plays a key role in IRF3 activation: acts by first phosphorylating innate adapter proteins MAVS, STING1 and TICAM1 on their pLxIS motif, leading to recruitment of IRF3, thereby licensing IRF3 for phosphorylation by TBK1. Phosphorylated IRF3 dissociates from the adapter proteins, dimerizes, and then enters the nucleus to induce expression of interferons. Thus, several scaffolding molecules including FADD, TRADD, MAVS, AZI2, TANK or TBKBP1/SINTBAD can be recruited to the TBK1-containing-complexes. Under particular conditions, functions as a NF-kappa-B effector by phosphorylating NF-kappa-B inhibitor alpha/NFKBIA, IKBKB or RELA to translocate NF-Kappa-B to the nucleus. Restricts bacterial proliferation by phosphorylating the autophagy receptor OPTN/Optineurin on 'Ser-177', thus enhancing LC3 binding affinity and antibacterial autophagy. Phosphorylates SMCR8 component of the C9orf72-SMCR8 complex, promoting autophagosome maturation. Phosphorylates ATG8 proteins MAP1LC3C and GABARAPL2, thereby preventing their delipidation and premature removal from nascent autophagosomes. Seems to play a role in energy balance regulation by sustaining a state of chronic, low-grade inflammation in obesity, which leads to a negative impact on insulin sensitivity. Attenuates retroviral budding by phosphorylating the endosomal sorting complex required for transport-I (ESCRT-I) subunit VPS37C. Phosphorylates Borna disease virus (BDV) P protein. Plays an essential role in the TLR3- and IFN-dependent control of herpes virus HSV-1 and HSV-2 infections in the central nervous system. Acts both as a positive and negative regulator of the mTORC1 complex, depending on the context: activates mTORC1 in response to growth factors by catalyzing phosphorylation of MTOR, while it limits the mTORC1 complex by promoting phosphorylation of RPTOR. Acts as a positive regulator of the mTORC2 complex by mediating phosphorylation of MTOR, leading to increased phosphorylation and activation of AKT1. Phosphorylates and activates AKT1. Involved in the regulation of TNF-induced RIPK1-mediated cell death, probably acting via CYLD phosphorylation that in turn controls RIPK1 ubiquitination status. Also participates in the differentiation of T follicular regulatory cells together with the receptor ICOS. This Homo sapiens (Human) protein is Serine/threonine-protein kinase TBK1.